Reading from the N-terminus, the 189-residue chain is Ribosome maturation factor RimM (189 aa).

In terms of domain architecture, PRC barrel spans 95-169 (DEDEFFQTDL…IIKVEPHAAG (75 aa)). The interval 168–189 (AGLIADEHDNPPHESGKKPKKP) is disordered. Over residues 172–189 (ADEHDNPPHESGKKPKKP) the composition is skewed to basic and acidic residues.

Belongs to the RimM family. Binds ribosomal protein uS19.

It localises to the cytoplasm. Functionally, an accessory protein needed during the final step in the assembly of 30S ribosomal subunit, possibly for assembly of the head region. Essential for efficient processing of 16S rRNA. May be needed both before and after RbfA during the maturation of 16S rRNA. It has affinity for free ribosomal 30S subunits but not for 70S ribosomes. This Brucella abortus (strain S19) protein is Ribosome maturation factor RimM.